The primary structure comprises 572 residues: Phosphoenolpyruvate-protein phosphotransferase (572 aa).

His190 (tele-phosphohistidine intermediate) is an active-site residue. Residues Arg297 and Arg333 each contribute to the phosphoenolpyruvate site. Mg(2+) contacts are provided by Glu432 and Asp456. Residues 455 to 456 and Arg466 each bind phosphoenolpyruvate; that span reads ND. The active-site Proton donor is the Cys503.

It belongs to the PEP-utilizing enzyme family. Homodimer. Requires Mg(2+) as cofactor.

The protein resides in the cytoplasm. The catalysed reaction is L-histidyl-[protein] + phosphoenolpyruvate = N(pros)-phospho-L-histidyl-[protein] + pyruvate. Functionally, general (non sugar-specific) component of the phosphoenolpyruvate-dependent sugar phosphotransferase system (sugar PTS). This major carbohydrate active-transport system catalyzes the phosphorylation of incoming sugar substrates concomitantly with their translocation across the cell membrane. Enzyme I transfers the phosphoryl group from phosphoenolpyruvate (PEP) to the phosphoryl carrier protein (HPr). This Listeria innocua serovar 6a (strain ATCC BAA-680 / CLIP 11262) protein is Phosphoenolpyruvate-protein phosphotransferase (ptsI).